A 393-amino-acid chain; its full sequence is Demethylspheroidene O-methyltransferase (393 aa).

The tract at residues 1–36 (MPKDDHTGATADRTAQPTGTGKQPLVPGQPGAAPVQ) is disordered. The segment covering 26–36 (VPGQPGAAPVQ) has biased composition (low complexity). Asp259 and Arg297 together coordinate S-adenosyl-L-methionine.

It belongs to the class I-like SAM-binding methyltransferase superfamily. Cation-independent O-methyltransferase family.

The enzyme catalyses demethylspheroidene + S-adenosyl-L-methionine = spheroidene + S-adenosyl-L-homocysteine + H(+). It participates in carotenoid biosynthesis; spheroidene biosynthesis. Methyltransferase that mediates the O-methylation of 1-hydroxy carotenoids. Converts hydroxyneurosporene to methoxyneurosporene or demethylspheroidene to spheroidene. Also able to produce spirilloxanthin. This is Demethylspheroidene O-methyltransferase (crtF) from Rhodobacter capsulatus (strain ATCC BAA-309 / NBRC 16581 / SB1003).